The following is a 227-amino-acid chain: Adapter protein MecA 1 (227 aa).

It belongs to the MecA family. In terms of assembly, homodimer.

Its function is as follows. Enables the recognition and targeting of unfolded and aggregated proteins to the ClpC protease or to other proteins involved in proteolysis. Acts negatively in the development of competence by binding ComK and recruiting it to the ClpCP protease. When overexpressed, inhibits sporulation. Also involved in Spx degradation by ClpC. The chain is Adapter protein MecA 1 (mecA1) from Bacillus anthracis.